The primary structure comprises 96 residues: RNA-binding protein Hfq (96 aa).

Residues 9–68 form the Sm domain; it reads DPYLNALRRERIPVSIYLVNGIKLQGQIESFDQFVILLKNTVNQMVYKHAISTVVPARSV. The disordered stretch occupies residues 65-96; it reads ARSVSHHNNPQQQQQHSQQTESAAPAAEPQAE. Over residues 70–96 the composition is skewed to low complexity; the sequence is HHNNPQQQQQHSQQTESAAPAAEPQAE.

Belongs to the Hfq family. Homohexamer.

Its function is as follows. RNA chaperone that binds small regulatory RNA (sRNAs) and mRNAs to facilitate mRNA translational regulation in response to envelope stress, environmental stress and changes in metabolite concentrations. Also binds with high specificity to tRNAs. The sequence is that of RNA-binding protein Hfq from Mannheimia succiniciproducens (strain KCTC 0769BP / MBEL55E).